Here is a 186-residue protein sequence, read N- to C-terminus: Transposon Tn21 resolvase (186 aa).

The 134-residue stretch at 4–137 (QRIGYIRVST…EGIALAKQRG (134 aa)) folds into the Resolvase/invertase-type recombinase catalytic domain. The active-site O-(5'-phospho-DNA)-serine intermediate is S12. The segment at residues 164 to 183 (KTKLAREFGISRETLYQYLR) is a DNA-binding region (H-T-H motif).

It belongs to the site-specific recombinase resolvase family.

Functionally, resolvase catalyzes the resolution (a site-specific recombination) of the cointegrated replicon to yield the final transposition products. In Escherichia coli, this protein is Transposon Tn21 resolvase (tnpR).